Here is a 542-residue protein sequence, read N- to C-terminus: Putative cysteine ligase BshC (542 aa).

A coiled-coil region spans residues 458 to 487 (VAKNAAILQAQIEFLQHALERALLRKHETE).

It belongs to the BshC family.

In terms of biological role, involved in bacillithiol (BSH) biosynthesis. May catalyze the last step of the pathway, the addition of cysteine to glucosamine malate (GlcN-Mal) to generate BSH. The sequence is that of Putative cysteine ligase BshC from Geobacillus kaustophilus (strain HTA426).